A 144-amino-acid chain; its full sequence is Granulocyte-macrophage colony-stimulating factor (144 aa).

An N-terminal signal peptide occupies residues 1 to 17 (MWLQNLLFLNTVVCSIS). O-linked (GalNAc...) serine glycosylation is found at S22 and S24. T27 is a glycosylation site (O-linked (GalNAc...) threonine). N44, N45, and N54 each carry an N-linked (GlcNAc...) asparagine glycan. 2 disulfide bridges follow: C71–C113 and C105–C138.

Belongs to the GM-CSF family. In terms of assembly, monomer. The signaling GM-CSF receptor complex is a dodecamer of two head-to-head hexamers of two alpha, two beta, and two ligand subunits.

The protein resides in the secreted. In terms of biological role, cytokine that stimulates the growth and differentiation of hematopoietic precursor cells from various lineages, including granulocytes, macrophages, eosinophils and erythrocytes. In Felis catus (Cat), this protein is Granulocyte-macrophage colony-stimulating factor (CSF2).